We begin with the raw amino-acid sequence, 232 residues long: tRNA (guanine-N(1)-)-methyltransferase (232 aa).

Residues Gly111 and 131 to 136 (IGDYIL) each bind S-adenosyl-L-methionine.

The protein belongs to the RNA methyltransferase TrmD family. As to quaternary structure, homodimer.

Its subcellular location is the cytoplasm. The enzyme catalyses guanosine(37) in tRNA + S-adenosyl-L-methionine = N(1)-methylguanosine(37) in tRNA + S-adenosyl-L-homocysteine + H(+). In terms of biological role, specifically methylates guanosine-37 in various tRNAs. The protein is tRNA (guanine-N(1)-)-methyltransferase of Bartonella bacilliformis (strain ATCC 35685 / KC583 / Herrer 020/F12,63).